The chain runs to 621 residues: Chaperone protein HtpG (621 aa).

The interval 1–341 (MSNQEYTFQT…SEDLPLNVSR (341 aa)) is a; substrate-binding. Positions 342 to 547 (EILQQNKILA…GDEQNAMMAN (206 aa)) are b. Positions 548–621 (WMRQMGQSVP…RLNSVLLKAL (74 aa)) are c.

This sequence belongs to the heat shock protein 90 family. In terms of assembly, homodimer.

The protein localises to the cytoplasm. Its function is as follows. Molecular chaperone. Has ATPase activity. The chain is Chaperone protein HtpG from Helicobacter pylori (strain ATCC 700392 / 26695) (Campylobacter pylori).